A 186-amino-acid polypeptide reads, in one-letter code: ATP synthase subunit delta (186 aa).

The protein belongs to the ATPase delta chain family. F-type ATPases have 2 components, F(1) - the catalytic core - and F(0) - the membrane proton channel. F(1) has five subunits: alpha(3), beta(3), gamma(1), delta(1), epsilon(1). F(0) has three main subunits: a(1), b(2) and c(10-14). The alpha and beta chains form an alternating ring which encloses part of the gamma chain. F(1) is attached to F(0) by a central stalk formed by the gamma and epsilon chains, while a peripheral stalk is formed by the delta and b chains.

The protein resides in the cell membrane. Functionally, f(1)F(0) ATP synthase produces ATP from ADP in the presence of a proton or sodium gradient. F-type ATPases consist of two structural domains, F(1) containing the extramembraneous catalytic core and F(0) containing the membrane proton channel, linked together by a central stalk and a peripheral stalk. During catalysis, ATP synthesis in the catalytic domain of F(1) is coupled via a rotary mechanism of the central stalk subunits to proton translocation. In terms of biological role, this protein is part of the stalk that links CF(0) to CF(1). It either transmits conformational changes from CF(0) to CF(1) or is implicated in proton conduction. The chain is ATP synthase subunit delta from Wolbachia sp. subsp. Brugia malayi (strain TRS).